The primary structure comprises 105 residues: uncharacterized protein (105 aa).

The chain crosses the membrane as a helical span at residues 25–47; it reads AHSVTLLFGIFRSSPFLLLFLLI. Residues 54–89 are disordered; the sequence is GRGSQRMKKKRGRANPSENLRERADPTNGPAENGKK.

It localises to the membrane. This is an uncharacterized protein from Saccharomyces cerevisiae (strain ATCC 204508 / S288c) (Baker's yeast).